The primary structure comprises 161 residues: Phosphopantetheine adenylyltransferase (161 aa).

Residue Thr9 coordinates substrate. ATP contacts are provided by residues 9–10 and His17; that span reads TF. The substrate site is built by Lys41, Leu73, and Arg87. ATP contacts are provided by residues 88–90, Glu98, and 123–129; these read GLR and YQFISGT.

The protein belongs to the bacterial CoaD family. Homohexamer. Mg(2+) is required as a cofactor.

It is found in the cytoplasm. The catalysed reaction is (R)-4'-phosphopantetheine + ATP + H(+) = 3'-dephospho-CoA + diphosphate. It participates in cofactor biosynthesis; coenzyme A biosynthesis; CoA from (R)-pantothenate: step 4/5. Reversibly transfers an adenylyl group from ATP to 4'-phosphopantetheine, yielding dephospho-CoA (dPCoA) and pyrophosphate. The chain is Phosphopantetheine adenylyltransferase from Cupriavidus necator (strain ATCC 17699 / DSM 428 / KCTC 22496 / NCIMB 10442 / H16 / Stanier 337) (Ralstonia eutropha).